Consider the following 3658-residue polypeptide: E3 ubiquitin-protein ligase UPL2 (3658 aa).

A compositionally biased stretch (basic and acidic residues) spans 884–893 (DEKKSVDRAS). Positions 884-914 (DEKKSVDRASDNSVSASSSTAERESDEDSSN) are disordered. Low complexity predominate over residues 894–903 (DNSVSASSST). A UBA domain is found at 1271–1312 (QPDEAIVGMIVEMGFSRSRAEDALRRVGTNSVEMAMDWLFTN). Residues 1318-1337 (QEDDELAQALALSLGNSSET) enclose the UIM domain. 9 disordered regions span residues 1331 to 1360 (LGNS…KEPP), 1702 to 1733 (VSGS…SKSH), 2004 to 2038 (AEQL…VDEL), 2052 to 2072 (VDNG…RGSS), 2113 to 2204 (HVED…DDMV), 2293 to 2313 (PLFS…SAGS), 2417 to 2487 (ERET…EGGG), 2503 to 2591 (SAQG…PEVN), and 2958 to 2987 (SPSS…AESE). The segment covering 1338–1347 (PKLEDTEKPV) has biased composition (basic and acidic residues). Basic and acidic residues predominate over residues 2007-2027 (LKSEVPNEQKNTDSDERHDSH). Residues 2028–2038 (GTSTSTEVDEL) are compositionally biased toward polar residues. Composition is skewed to acidic residues over residues 2117-2144 (RADD…DSVE) and 2156-2204 (DVED…DDMV). The span at 2297 to 2313 (RPSQTGNTASVSASAGS) shows a compositional bias: polar residues. The span at 2422–2431 (TTEVQEQQQP) shows a compositional bias: low complexity. Over residues 2503–2518 (SAQGQSDTSGIQNVSV) the composition is skewed to polar residues. Ser2582 carries the post-translational modification Phosphoserine. The 342-residue stretch at 3317 to 3658 (SPQDLKGRLN…HEANEGFGFA (342 aa)) folds into the HECT domain. Cys3625 functions as the Glycyl thioester intermediate in the catalytic mechanism.

The protein belongs to the UPL family. TOM1/PTR1 subfamily. As to expression, widely expressed. Expressed in root, stem, cauline and rosette leaf, seedling and flower (at protein level).

The enzyme catalyses S-ubiquitinyl-[E2 ubiquitin-conjugating enzyme]-L-cysteine + [acceptor protein]-L-lysine = [E2 ubiquitin-conjugating enzyme]-L-cysteine + N(6)-ubiquitinyl-[acceptor protein]-L-lysine.. It functions in the pathway protein modification; protein ubiquitination. Its function is as follows. Probable E3 ubiquitin-protein ligase which mediates ubiquitination and subsequent proteasomal degradation of target proteins. The chain is E3 ubiquitin-protein ligase UPL2 (UPL2) from Arabidopsis thaliana (Mouse-ear cress).